Here is a 292-residue protein sequence, read N- to C-terminus: Glycine--tRNA ligase alpha subunit (292 aa).

The protein belongs to the class-II aminoacyl-tRNA synthetase family. In terms of assembly, tetramer of two alpha and two beta subunits.

Its subcellular location is the cytoplasm. The enzyme catalyses tRNA(Gly) + glycine + ATP = glycyl-tRNA(Gly) + AMP + diphosphate. In Synechococcus elongatus (strain ATCC 33912 / PCC 7942 / FACHB-805) (Anacystis nidulans R2), this protein is Glycine--tRNA ligase alpha subunit.